Reading from the N-terminus, the 834-residue chain is 5-hydroxytryptamine receptor 2A (834 aa).

Topologically, residues Met-1–Ser-230 are extracellular. The segment at Thr-56–Ser-75 is disordered. N-linked (GlcNAc...) asparagine glycans are attached at residues Asn-68, Asn-97, Asn-161, Asn-175, Asn-183, Asn-194, Asn-203, and Asn-209. Residues Val-231–Leu-253 traverse the membrane as a helical segment. At Glu-254 to Tyr-263 the chain is on the cytoplasmic side. The chain crosses the membrane as a helical span at residues Leu-264–Val-285. Residues Tyr-286–Asp-300 are Extracellular-facing. A disulfide bridge connects residues Cys-299 and Cys-378. The helical transmembrane segment at Ile-301–Val-322 threads the bilayer. Residues Asp-323–Arg-341 lie on the Cytoplasmic side of the membrane. The chain crosses the membrane as a helical span at residues Val-342–Trp-364. Residues Lys-365–Thr-391 are Extracellular-facing. Residues Cys-392–Ala-413 traverse the membrane as a helical segment. The Cytoplasmic segment spans residues Arg-414 to Thr-752. Disordered regions lie at residues Arg-420–Thr-442, Lys-460–Gly-516, Gln-531–Gln-599, Leu-617–Ala-640, and Ser-674–Ala-743. Polar residues-rich tracts occupy residues Gly-482–Asp-502 and Gln-532–Ala-542. Over residues Arg-551–Gln-564 the composition is skewed to basic and acidic residues. Over residues Glu-565–Glu-575 the composition is skewed to acidic residues. Low complexity predominate over residues Thr-582–Thr-593. Residues Ser-674 to Ser-694 are compositionally biased toward polar residues. Over residues Gln-702–Gln-723 the composition is skewed to low complexity. Residues Leu-753 to Leu-776 form a helical membrane-spanning segment. Residues Cys-777 to Ser-785 are Extracellular-facing. Residues Val-786–Phe-808 form a helical membrane-spanning segment. The Cytoplasmic segment spans residues Ser-809 to Leu-834.

Belongs to the G-protein coupled receptor 1 family.

The protein localises to the cell membrane. This is one of the several different receptors for 5-hydroxytryptamine (serotonin), a biogenic hormone that functions as a neurotransmitter, a hormone, and a mitogen. The activity of this receptor is mediated by G proteins which inhibit adenylate cyclase. This is 5-hydroxytryptamine receptor 2A (5-HT1A) from Drosophila melanogaster (Fruit fly).